The sequence spans 521 residues: GMP synthase [glutamine-hydrolyzing] (521 aa).

The Glutamine amidotransferase type-1 domain occupies 5–197 (KILILDFGSQ…VLDICGAQPS (193 aa)). The active-site Nucleophile is the C81. Active-site residues include H171 and E173. Positions 198–390 (WTMPNYIEEA…LGLPREMVYR (193 aa)) constitute a GMPS ATP-PPase domain. 225-231 (SGGVDSS) lines the ATP pocket.

As to quaternary structure, homodimer.

The catalysed reaction is XMP + L-glutamine + ATP + H2O = GMP + L-glutamate + AMP + diphosphate + 2 H(+). The protein operates within purine metabolism; GMP biosynthesis; GMP from XMP (L-Gln route): step 1/1. In terms of biological role, catalyzes the synthesis of GMP from XMP. This Neisseria meningitidis serogroup C / serotype 2a (strain ATCC 700532 / DSM 15464 / FAM18) protein is GMP synthase [glutamine-hydrolyzing].